Consider the following 128-residue polypeptide: Diacylglycerol kinase (128 aa).

Glutamate 34 serves as a coordination point for a divalent metal cation. A run of 2 helical transmembrane segments spans residues 35–55 (SAFR…SYLA) and 58–78 (FLEW…ELIN). The active-site Proton acceptor is the glutamate 75. Glutamate 82 is a binding site for a divalent metal cation. Residues 107 to 127 (QLIGLIFWTLIWGRYLLALYL) traverse the membrane as a helical segment.

Belongs to the bacterial diacylglycerol kinase family. Mg(2+) serves as cofactor.

Its subcellular location is the cell inner membrane. It catalyses the reaction a 1,2-diacyl-sn-glycerol + ATP = a 1,2-diacyl-sn-glycero-3-phosphate + ADP + H(+). Its function is as follows. Catalyzes the ATP-dependent phosphorylation of sn-l,2-diacylglycerol (DAG) to phosphatidic acid. Involved in the recycling of diacylglycerol produced as a by-product during membrane-derived oligosaccharide (MDO) biosynthesis. This Helicobacter pylori (strain ATCC 700392 / 26695) (Campylobacter pylori) protein is Diacylglycerol kinase (dgkA).